A 323-amino-acid chain; its full sequence is GTP 3',8-cyclase (323 aa).

In terms of domain architecture, Radical SAM core spans 4–233 (KYGREIDYLR…NGPAKYISIE (230 aa)). Arg-13 serves as a coordination point for GTP. 2 residues coordinate [4Fe-4S] cluster: Cys-20 and Cys-24. S-adenosyl-L-methionine is bound at residue Tyr-26. [4Fe-4S] cluster is bound at residue Cys-27. Arg-63 lines the GTP pocket. Residue Gly-67 participates in S-adenosyl-L-methionine binding. Residue Thr-94 participates in GTP binding. Residue Ser-118 coordinates S-adenosyl-L-methionine. A GTP-binding site is contributed by Lys-154. An S-adenosyl-L-methionine-binding site is contributed by Met-188. Residues Cys-250 and Cys-253 each contribute to the [4Fe-4S] cluster site. Residue 255-257 (RIR) participates in GTP binding. Cys-267 contacts [4Fe-4S] cluster.

This sequence belongs to the radical SAM superfamily. MoaA family. As to quaternary structure, monomer and homodimer. Requires [4Fe-4S] cluster as cofactor.

It carries out the reaction GTP + AH2 + S-adenosyl-L-methionine = (8S)-3',8-cyclo-7,8-dihydroguanosine 5'-triphosphate + 5'-deoxyadenosine + L-methionine + A + H(+). Its pathway is cofactor biosynthesis; molybdopterin biosynthesis. Catalyzes the cyclization of GTP to (8S)-3',8-cyclo-7,8-dihydroguanosine 5'-triphosphate. This chain is GTP 3',8-cyclase, found in Clostridium perfringens (strain SM101 / Type A).